The following is a 255-amino-acid chain: Cathepsin G (255 aa).

The first 18 residues, 1 to 18 (MQPLLLLLAFLLPTGAEA), serve as a signal peptide directing secretion. The propeptide at 19–20 (GE) is activation peptide. Residues 21 to 25 (IIGGR) are important for antimicrobial activity. One can recognise a Peptidase S1 domain in the interval 21–243 (IIGGRESRPH…FLPWIRTTMR (223 aa)). The cysteines at positions 49 and 65 are disulfide-linked. His64 serves as the catalytic Charge relay system. N-linked (GlcNAc...) (complex) asparagine; alternate glycosylation is present at Asn71. The N-linked (GlcNAc...) (paucimannose) asparagine; alternate glycan is linked to Asn71. Residues 97-111 (HPQYNQRTIQNDIML) are important for antimicrobial activity. The Charge relay system role is filled by Asp108. Intrachain disulfides connect Cys142/Cys207 and Cys172/Cys186. The active-site Charge relay system is the Ser201. A propeptide spanning residues 245–255 (FKLLDQMETPL) is cleaved from the precursor.

The protein belongs to the peptidase S1 family. (Microbial infection) Interacts with CASP4; the interaction is promoted by the Td92 surface protein of the periodontal pathogen T.denticola and leads to CASP4 activation. As to quaternary structure, (Microbial infection) Interacts with M.tuberculosis protein Rv3364c. In terms of assembly, (Microbial infection) Interacts with S.aureus EapH1; EapH1 acts as a reversible inhibitor of CATG activity. In terms of processing, two C-terminal truncation variants have been identified, one which ends at Arg-243 and one which ends at Ser-244. Expressed in neutrophils (at protein level). Expressed in B cells.

The protein localises to the cell membrane. The protein resides in the cytoplasmic granule. Its subcellular location is the secreted. It is found in the cytoplasm. It localises to the cytosol. The protein localises to the lysosome. The protein resides in the nucleus. It catalyses the reaction Specificity similar to chymotrypsin C.. Its activity is regulated as follows. Inhibited by soybean trypsin inhibitor, benzamidine, the synthetic peptide R13K, Z-Gly-Leu-Phe-CH2Cl, phenylmethylsulfonyl fluoride, 3,4-dichloroisocoumarin, DFP, SBTI and alpha-1-antitrypsin. Inhibited by LPS from P.aeruginosa but not by LPS from S.minnesota. Not inhibited by elastinal, CMK, TLCK, ETDA or leupeptin. (Microbial infection) Inhibited reversibly by S.aureus EapH1. With respect to regulation, (Microbial infection) Activity is induced by the Td92 surface protein of the periodontal pathogen T.denticola. In terms of biological role, serine protease with trypsin- and chymotrypsin-like specificity. Also displays antibacterial activity against Gram-negative and Gram-positive bacteria independent of its protease activity. Prefers Phe and Tyr residues in the P1 position of substrates but also cleaves efficiently after Trp and Leu. Shows a preference for negatively charged amino acids in the P2' position and for aliphatic amino acids both upstream and downstream of the cleavage site. Required for recruitment and activation of platelets which is mediated by the F2RL3/PAR4 platelet receptor. Binds reversibly to and stimulates B cells and CD4(+) and CD8(+) T cells. Also binds reversibly to natural killer (NK) cells and enhances NK cell cytotoxicity through its protease activity. Cleaves complement C3. Cleaves vimentin. Cleaves thrombin receptor F2R/PAR1 and acts as either an agonist or an inhibitor, depending on the F2R cleavage site. Cleavage of F2R at '41-Arg-|-Ser-42' results in receptor activation while cleavage at '55-Phe-|-Trp-56' results in inhibition of receptor activation. Cleaves the synovial mucin-type protein PRG4/lubricin. Cleaves and activates IL36G which promotes expression of chemokines CXCL1 and CXLC8 in keratinocytes. Cleaves IL33 into mature forms which have greater activity than the unprocessed form. Cleaves coagulation factor F8 to produce a partially activated form. Also cleaves and activates coagulation factor F10. Cleaves leukocyte cell surface protein SPN/CD43 to release its extracellular domain and trigger its intramembrane proteolysis by gamma-secretase, releasing the CD43 cytoplasmic tail chain (CD43-ct) which translocates to the nucleus. Cleaves CCL5/RANTES to produce RANTES(4-68) lacking the N-terminal three amino acids which exhibits reduced chemotactic and antiviral activities. During apoptosis, cleaves SMARCA2/BRM to produce a 160 kDa cleavage product which localizes to the cytosol. Cleaves myelin basic protein MBP in B cell lysosomes at '224-Phe-|-Lys-225' and '248-Phe-|-Ser-249', degrading the major immunogenic MBP epitope and preventing the activation of MBP-specific autoreactive T cells. Cleaves annexin ANXA1 and antimicrobial peptide CAMP to produce peptides which act on neutrophil N-formyl peptide receptors to enhance the release of CXCL2. Acts as a ligand for the N-formyl peptide receptor FPR1, enhancing phagocyte chemotaxis. Has antibacterial activity against the Gram-negative bacteria N.gonorrhoeae and P.aeruginosa. Likely to act against N.gonorrhoeae by interacting with N.gonorrhoeae penA/PBP2. Exhibits potent antimicrobial activity against the Gram-positive bacterium L.monocytogenes. Has antibacterial activity against the Gram-positive bacterium S.aureus and degrades S.aureus biofilms, allowing polymorphonuclear leukocytes to penetrate the biofilm and phagocytose bacteria. Has antibacterial activity against M.tuberculosis. Mediates CASP4 activation induced by the Td92 surface protein of the periodontal pathogen T.denticola, causing production and secretion of IL1A and leading to pyroptosis of gingival fibroblasts. Induces platelet aggregation which is strongly potentiated in the presence of ELANE. This Homo sapiens (Human) protein is Cathepsin G (CTSG).